We begin with the raw amino-acid sequence, 603 residues long: DNA ligase (603 aa).

Glu262 serves as a coordination point for ATP. The N6-AMP-lysine intermediate role is filled by Lys264. Residues Arg269, Arg285, Glu315, Phe355, Arg432, and Lys438 each contribute to the ATP site.

Belongs to the ATP-dependent DNA ligase family. Mg(2+) is required as a cofactor.

The catalysed reaction is ATP + (deoxyribonucleotide)n-3'-hydroxyl + 5'-phospho-(deoxyribonucleotide)m = (deoxyribonucleotide)n+m + AMP + diphosphate.. DNA ligase that seals nicks in double-stranded DNA during DNA replication, DNA recombination and DNA repair. This chain is DNA ligase, found in Caldivirga maquilingensis (strain ATCC 700844 / DSM 13496 / JCM 10307 / IC-167).